Reading from the N-terminus, the 440-residue chain is Adenylosuccinate lyase (440 aa).

Residues 4 to 5, 67 to 69, and 93 to 94 contribute to the N(6)-(1,2-dicarboxyethyl)-AMP site; these read RY, KHD, and TS. The active-site Proton donor/acceptor is the His-141. Gln-212 is a N(6)-(1,2-dicarboxyethyl)-AMP binding site. Catalysis depends on Ser-262, which acts as the Proton donor/acceptor. Residues Ser-263, 268–270, Asn-276, and 307–311 each bind N(6)-(1,2-dicarboxyethyl)-AMP; these read KRN and SVERF.

It belongs to the lyase 1 family. Adenylosuccinate lyase subfamily. Homotetramer. Residues from neighboring subunits contribute catalytic and substrate-binding residues to each active site.

The enzyme catalyses N(6)-(1,2-dicarboxyethyl)-AMP = fumarate + AMP. The catalysed reaction is (2S)-2-[5-amino-1-(5-phospho-beta-D-ribosyl)imidazole-4-carboxamido]succinate = 5-amino-1-(5-phospho-beta-D-ribosyl)imidazole-4-carboxamide + fumarate. It functions in the pathway purine metabolism; AMP biosynthesis via de novo pathway; AMP from IMP: step 2/2. The protein operates within purine metabolism; IMP biosynthesis via de novo pathway; 5-amino-1-(5-phospho-D-ribosyl)imidazole-4-carboxamide from 5-amino-1-(5-phospho-D-ribosyl)imidazole-4-carboxylate: step 2/2. In terms of biological role, catalyzes two reactions in de novo purine nucleotide biosynthesis. Catalyzes the breakdown of 5-aminoimidazole- (N-succinylocarboxamide) ribotide (SAICAR or 2-[5-amino-1-(5-phospho-beta-D-ribosyl)imidazole-4-carboxamido]succinate) to 5-aminoimidazole-4-carboxamide ribotide (AICAR or 5-amino-1-(5-phospho-beta-D-ribosyl)imidazole-4-carboxamide) and fumarate, and of adenylosuccinate (ADS or N(6)-(1,2-dicarboxyethyl)-AMP) to adenosine monophosphate (AMP) and fumarate. The chain is Adenylosuccinate lyase (purB) from Helicobacter pylori (strain ATCC 700392 / 26695) (Campylobacter pylori).